The chain runs to 250 residues: Trypsin (250 aa).

Residues 1-15 (MRLLALLLMVGAAVA) form the signal peptide. A propeptide spans 16–22 (VPREDGR) (activation peptide). Residues 23-247 (IIGGHECAAH…FLGWIERTLE (225 aa)) form the Peptidase S1 domain. 6 disulfide bridges follow: Cys-29/Cys-163, Cys-47/Cys-63, Cys-133/Cys-236, Cys-140/Cys-209, Cys-174/Cys-188, and Cys-199/Cys-223. Active-site charge relay system residues include His-62 and Asp-106. Ser-203 (charge relay system) is an active-site residue.

This sequence belongs to the peptidase S1 family.

Its subcellular location is the secreted. The protein resides in the extracellular space. It catalyses the reaction Preferential cleavage: Arg-|-Xaa, Lys-|-Xaa.. This Pleuronectes platessa (European plaice) protein is Trypsin.